Consider the following 398-residue polypeptide: MNNHHTSSAAVLIIRLNPDAATAIWRLAAPGDTAQTGEWHPDAGDPTLSLLAQRHPAWVLVPASDCAFHRVALPAGARRRPQQALAFLLEEQLATEVEESHFALLHQHKTDCAVAVVGRGKMRAWQAWCDSLGLSVLALTPDVLALPHSPTGWSAVRCGEQWLFRCDTWGGMAVETVWLDQLLTHWQDLAPIACYSPPPDIAAPWQPLPAQDLLQLAAANPDARRICLRQGDFAAKRRRQPTPRRWRPVIVAALALLLLWSSNCLHDHLMLGQQADAAVQASRDFYRQWFQTEKNVVNPRLQMQQHLRQMKNAGARPALISRLGALQQIIDDTPGIRLRTLSFDAARNALQLEISAVSSQALEQFSQRARARFRVQTGEMKPRADGIEGRLTLEGNDA.

Residues 1 to 248 (MNNHHTSSAA…RQPTPRRWRP (248 aa)) lie on the Cytoplasmic side of the membrane. Residues 249–265 (VIVAALALLLLWSSNCL) form a helical membrane-spanning segment. The Periplasmic portion of the chain corresponds to 266 to 398 (HDHLMLGQQA…GRLTLEGNDA (133 aa)).

This sequence belongs to the GSP L family. As to quaternary structure, type II secretion system is composed of four main components: the outer membrane complex, the inner membrane complex, the cytoplasmic secretion ATPase and the periplasm-spanning pseudopilus. Forms homodimers. Interacts with PulM/GspM. Interacts with PulE/GspE and PulF/GspF.

Its subcellular location is the cell inner membrane. Inner membrane component of the type II secretion system required for the energy-dependent secretion of extracellular factors such as proteases and toxins from the periplasm. Plays a role in the complex assembly and recruits PulM resulting in a stable complex in the inner membrane. Provides thus a link between the energy-providing PulE protein in the cytoplasm and the rest of the T2SS machinery. The protein is Type II secretion system protein L (pulL) of Klebsiella pneumoniae.